Reading from the N-terminus, the 461-residue chain is Zinc transporter 6 (461 aa).

Residues 1-33 (MGTIHLFRKPQRSFFGKLLQEFRLVAADRRSWK) lie on the Cytoplasmic side of the membrane. A helical transmembrane segment spans residues 34 to 54 (ILLFGAINLTCTGFLLMWCSS). Over 55–64 (TNSIALTAYT) the chain is Extracellular. A helical membrane pass occupies residues 65–85 (YLTIFDLFSLITCLVSYWVMM). The Cytoplasmic segment spans residues 86–98 (RKPSPAYSFGFER). The chain crosses the membrane as a helical span at residues 99–119 (LEVLAVFASTVLAQLGALFIL). The Extracellular portion of the chain corresponds to 120–134 (KESAERFLEQPEIHT). Residues 135 to 155 (GRLLVGTFVALSFNLFTMLSI) form a helical membrane-spanning segment. Over 156–200 (RNKPFAYVSEAASTSWLQEHVADLSRSLCGIIPGLSSIFLPRMNP) the chain is Cytoplasmic. The helical transmembrane segment at 201 to 221 (FVLIDLAGAFALCITYMLIEI) threads the bilayer. At 222-223 (NN) the chain is on the extracellular side. Residues 224–244 (YFAVDTASAIAIALMTFGTMY) traverse the membrane as a helical segment. Topologically, residues 245–461 (PMSVYSGKVL…TNNRIGQPRP (217 aa)) are cytoplasmic. Positions 362 to 393 (PPLKGTDDSNPVTSTPTKPSSPPPEFSFNTPG) are disordered. Low complexity predominate over residues 370 to 379 (SNPVTSTPTK).

Belongs to the cation diffusion facilitator (CDF) transporter (TC 2.A.4) family. SLC30A subfamily. In terms of assembly, heterodimer with SLC30A5; form a functional zinc ion transmembrane transporter.

It localises to the golgi apparatus. The protein localises to the trans-Golgi network membrane. In terms of biological role, has probably no intrinsic transporter activity but together with SLC30A5 forms a functional zinc ion:proton antiporter heterodimer, mediating zinc entry into the lumen of organelles along the secretory pathway. As part of that zinc ion:proton antiporter, contributes to zinc ion homeostasis within the early secretory pathway and regulates the activation and folding of enzymes like alkaline phosphatases and enzymes involved in phosphatidylinositol glycan anchor biosynthesis. This is Zinc transporter 6 (SLC30A6) from Bos taurus (Bovine).